Consider the following 33-residue polypeptide: Protamine TP16 (33 aa).

The disordered stretch occupies residues 1–33; it reads MPRRRRSSSRPVRRRRRARVSRRRRRRGRRRRR.

In terms of tissue distribution, testis.

The protein resides in the nucleus. It localises to the chromosome. Protamines substitute for histones in the chromatin of sperm during the haploid phase of spermatogenesis. They compact sperm DNA into a highly condensed, stable and inactive complex. The sequence is that of Protamine TP16 from Oncorhynchus mykiss (Rainbow trout).